The primary structure comprises 229 residues: Protein FAM3C (229 aa).

Positions 1–24 are cleaved as a signal peptide; sequence MRIAGAIKFVVAVALFLLTFYVIS. Disulfide bonds link Cys-59/Cys-87 and Cys-65/Cys-222. A GG-type lectin domain is found at 68–226; it reads KHFAFKIASG…VEMEGCIPQK (159 aa).

It belongs to the FAM3 family. In terms of tissue distribution, expressed in the retinal ganglion cell layer.

It is found in the secreted. Its function is as follows. Involved in retinal laminar formation. The sequence is that of Protein FAM3C (fam3c) from Xenopus laevis (African clawed frog).